We begin with the raw amino-acid sequence, 502 residues long: Serine carboxypeptidase-like 40 (502 aa).

Positions 1–24 (MRKGQGYSYSVIASVLVLLCVVVS) are cleaved as a signal peptide. N-linked (GlcNAc...) asparagine glycosylation is found at N103 and N187. Cystine bridges form between C136–C384, C293–C307, and C331–C352. The active site involves S229. N333 and N373 each carry an N-linked (GlcNAc...) asparagine glycan. D420 is a catalytic residue. N-linked (GlcNAc...) asparagine glycosylation occurs at N436. The active site involves H473.

The protein belongs to the peptidase S10 family. As to expression, expressed in roots, leaves, flowers and siliques.

The protein localises to the secreted. Functionally, probable carboxypeptidase. The polypeptide is Serine carboxypeptidase-like 40 (SCPL40) (Arabidopsis thaliana (Mouse-ear cress)).